Here is a 520-residue protein sequence, read N- to C-terminus: MELASAHLHKGQVPWFGLLLTASLLASWSPPTTAQVTVMAFPLHAAEGNNVILVVYNMMKGVSAFSWHKGSTTSTNAEIVRFVTGTNKTIKGPVHSGRETLYSNGSLLIQRVTMKDTGVYTIEMTDQNYRRRVLTGQFHVHTLLLKSNITSNNSNPVEGDDSVSLTCDSYTDPDNITYLWSRNGESLSEGDRLKLSEGNRTLTLLNVTRNDTGPYVCETRNPVSVNRSDPFSLNIIYGPDTPIISPSDIYLHPGSNLNLSCHAASNPPAQYFWLINEKPHASSQELFIPNITTNNSGTYTCFVNNSVTGLSRTTVKNITVLEPVTQPSLQVTNTTVKELDSVTLTCLSKDRQAHIHWIFNNDTLLITEKMTTSQAGLILKIDPIKREDAGEYQCEISNPVSVKRSNSIKLEVIFDSTYDISDVPIAVIITGAVAGVILIAGLAYRLCSRKSRWGSDQRDLTEHKPSASNHNLAPSDNSPNKVDDVAYTVLNFNSQQPNRPTSAPSSPRATETVYSEVKKK.

The first 34 residues, 1–34 (MELASAHLHKGQVPWFGLLLTASLLASWSPPTTA), serve as a signal peptide directing secretion. An Ig-like V-type domain is found at 35-141 (QVTVMAFPLH…RVLTGQFHVH (107 aa)). Topologically, residues 35 to 422 (QVTVMAFPLH…IFDSTYDISD (388 aa)) are extracellular. Asn87, Asn104, Asn148, Asn152, Asn175, Asn199, Asn206, Asn210, Asn226, Asn258, Asn290, Asn294, Asn304, Asn317, Asn333, and Asn361 each carry an N-linked (GlcNAc...) asparagine glycan. 3 Ig-like C2-type domains span residues 145–234 (LKSN…FSLN), 239–319 (PDTP…KNIT), and 327–411 (PSLQ…IKLE). The cysteines at positions 167 and 217 are disulfide-linked. Cysteines 261 and 301 form a disulfide. Cys346 and Cys394 form a disulfide bridge. The chain crosses the membrane as a helical span at residues 423 to 443 (VPIAVIITGAVAGVILIAGLA). The Cytoplasmic portion of the chain corresponds to 444 to 520 (YRLCSRKSRW…ETVYSEVKKK (77 aa)). A disordered region spans residues 457-520 (QRDLTEHKPS…ETVYSEVKKK (64 aa)). Polar residues predominate over residues 466-480 (SASNHNLAPSDNSPN). Tyr487 carries the phosphotyrosine modification. Residues 490 to 513 (LNFNSQQPNRPTSAPSSPRATETV) show a composition bias toward polar residues. Residue Ser502 is modified to Phosphoserine. Residue Tyr514 is modified to Phosphotyrosine.

It belongs to the immunoglobulin superfamily. CEA family. As to quaternary structure, interacts weakly with MHV spike protein in tissue culture. As to expression, isoform 2 is detected in elongating spermatids within the seminiferous epithelium (at protein level). Expressed in kidney, colon, uterus, gut mononuclear cells, crypt epithelia of intestinal tissues, and to a lesser extent, in spleen. Expressed in brain including VMH, globus pallidus, ventral pallidum, striatum, olfactory bulb and hippocampus. Also detected in rectal carcinoma cell line CMT93. Isoform 2 and isoform 3 are expressed in testis. Isoform 2 is detected in seminiferous tubule, not detected in epididymal spermatozoa. Also not observed on spermatogonia, spermatocytes, round spermatids or somatic Sertoli cells. During stages I-VII of spermatogenesis, detected on the elongating spermatids. At spermiation (stage VIII) and subsequent stages IX-XII, levels are drastically reduced or absent in the seminiferous tubules. Sometimes weakly detected in the apical region of stage-VIII seminiferous epithelium. Isoform 2 level is very low in stomach, kidney, intestine, liver and spleen.

The protein localises to the cell membrane. Functionally, controls energy balance and peripheral insulin action. Involved in the regulation of feeding behavior particularly in the ventromedial nucleus of hypothalamus (VMH) regulation of food intake. Has a role in the regulation of metabolic rate and insulin sensitivity or resistance via effects on brown adipogenesis, sympathetic nervous outflow to brown adipose tissue, spontaneous activity and energy expenditure in skeletal muscle. In case of murine coronavirus (MHV) infection, does probably not serve as functional receptor for the virus. In terms of biological role, isoform 2 may be an adhesion molecule contributing to cell to cell adhesion between elongating spermatids and Sertoli cells within the seminiferous epithelium. This chain is Cell adhesion molecule CEACAM2, found in Mus musculus (Mouse).